Consider the following 469-residue polypeptide: Glutamate--tRNA ligase (469 aa).

The 'HIGH' region signature appears at 9-19 (PSPTGFLHVGG). Residues Cys-98, Cys-100, Cys-125, and Asp-127 each contribute to the Zn(2+) site. The 'KMSKS' region motif lies at 236 to 240 (KLSKR). Lys-239 is an ATP binding site.

The protein belongs to the class-I aminoacyl-tRNA synthetase family. Glutamate--tRNA ligase type 1 subfamily. As to quaternary structure, monomer. The cofactor is Zn(2+).

It is found in the cytoplasm. It catalyses the reaction tRNA(Glu) + L-glutamate + ATP = L-glutamyl-tRNA(Glu) + AMP + diphosphate. In terms of biological role, catalyzes the attachment of glutamate to tRNA(Glu) in a two-step reaction: glutamate is first activated by ATP to form Glu-AMP and then transferred to the acceptor end of tRNA(Glu). The sequence is that of Glutamate--tRNA ligase from Shewanella baltica (strain OS155 / ATCC BAA-1091).